Reading from the N-terminus, the 171-residue chain is Transcription antitermination protein NusB (171 aa).

This sequence belongs to the NusB family.

Involved in transcription antitermination. Required for transcription of ribosomal RNA (rRNA) genes. Binds specifically to the boxA antiterminator sequence of the ribosomal RNA (rrn) operons. The polypeptide is Transcription antitermination protein NusB (Pelodictyon phaeoclathratiforme (strain DSM 5477 / BU-1)).